The primary structure comprises 113 residues: Putative pterin-4-alpha-carbinolamine dehydratase (113 aa).

The protein belongs to the pterin-4-alpha-carbinolamine dehydratase family.

The enzyme catalyses (4aS,6R)-4a-hydroxy-L-erythro-5,6,7,8-tetrahydrobiopterin = (6R)-L-erythro-6,7-dihydrobiopterin + H2O. The chain is Putative pterin-4-alpha-carbinolamine dehydratase from Idiomarina loihiensis (strain ATCC BAA-735 / DSM 15497 / L2-TR).